We begin with the raw amino-acid sequence, 250 residues long: 5'-nucleotidase SurE (250 aa).

Residues Asp-8, Asp-9, Ser-40, and Asn-94 each coordinate a divalent metal cation.

It belongs to the SurE nucleotidase family. It depends on a divalent metal cation as a cofactor.

The protein resides in the cytoplasm. The enzyme catalyses a ribonucleoside 5'-phosphate + H2O = a ribonucleoside + phosphate. Its function is as follows. Nucleotidase that shows phosphatase activity on nucleoside 5'-monophosphates. This chain is 5'-nucleotidase SurE, found in Wolbachia sp. subsp. Drosophila simulans (strain wRi).